A 307-amino-acid chain; its full sequence is tRNA pseudouridine synthase B (307 aa).

D38 functions as the Nucleophile in the catalytic mechanism.

It belongs to the pseudouridine synthase TruB family. Type 1 subfamily.

The enzyme catalyses uridine(55) in tRNA = pseudouridine(55) in tRNA. In terms of biological role, responsible for synthesis of pseudouridine from uracil-55 in the psi GC loop of transfer RNAs. This is tRNA pseudouridine synthase B from Lachnoclostridium phytofermentans (strain ATCC 700394 / DSM 18823 / ISDg) (Clostridium phytofermentans).